Consider the following 91-residue polypeptide: Early E3B 10.4 kDa protein (91 aa).

The N-terminal stretch at 1–22 is a signal peptide; it reads MIPRNFFFTILICPFNVCATFT. Residues 23 to 34 are Lumenal-facing; it reads AVATASPDCIGP. Residues 35–60 traverse the membrane as a helical segment; sequence FASYALFAFVTCICVCSIVCLVINFF. At 61-91 the chain is on the cytoplasmic side; it reads QLVDWIFVRIAYLRHHPEYRNQNVAALLRLI.

Belongs to the adenoviridae E3B family.

It is found in the host endoplasmic reticulum membrane. In terms of biological role, down-regulates the EGF receptor. The sequence is that of Early E3B 10.4 kDa protein from Human adenovirus B serotype 3 (HAdV-3).